The chain runs to 298 residues: MNIRIGTRGSVLALAQTLEVTNLLNRYFPEINIQVVKIKTSGDINNKVPINTIGGKGLFIKEIEEALLIGKVDLAVHSVKDIPAFYCDGLIIPCVLKRSSPYDVFVSSKYQSIKSLPINATVGTSSIRRKVQLNYLRPDLQVIPVRGNIDTRILKSDIGEFDGIVLAEAGLIRINKCNVIKEVLDSKIMLSAVGQGAICVQCRADDYNIINKIKVLNCHKSYVCVIAERSFLKTINGSCDTPLAALAQYVDSDTIYMSCMLSNEKEMVFSDCYFKECNAEESGIDMGKKLINELYGSC.

C239 is subject to S-(dipyrrolylmethanemethyl)cysteine.

The protein belongs to the HMBS family. In terms of assembly, monomer. Dipyrromethane is required as a cofactor.

It catalyses the reaction 4 porphobilinogen + H2O = hydroxymethylbilane + 4 NH4(+). It functions in the pathway porphyrin-containing compound metabolism; protoporphyrin-IX biosynthesis; coproporphyrinogen-III from 5-aminolevulinate: step 2/4. Functionally, tetrapolymerization of the monopyrrole PBG into the hydroxymethylbilane pre-uroporphyrinogen in several discrete steps. This chain is Porphobilinogen deaminase, found in Ehrlichia canis (strain Jake).